We begin with the raw amino-acid sequence, 297 residues long: tRNA dimethylallyltransferase (297 aa).

8–15 is an ATP binding site; it reads GATASGKS. 10–15 provides a ligand contact to substrate; it reads TASGKS. The interval 33–36 is interaction with substrate tRNA; it reads DSLS.

This sequence belongs to the IPP transferase family. Monomer. Mg(2+) is required as a cofactor.

It catalyses the reaction adenosine(37) in tRNA + dimethylallyl diphosphate = N(6)-dimethylallyladenosine(37) in tRNA + diphosphate. Functionally, catalyzes the transfer of a dimethylallyl group onto the adenine at position 37 in tRNAs that read codons beginning with uridine, leading to the formation of N6-(dimethylallyl)adenosine (i(6)A). The polypeptide is tRNA dimethylallyltransferase (Sulfurimonas denitrificans (strain ATCC 33889 / DSM 1251) (Thiomicrospira denitrificans (strain ATCC 33889 / DSM 1251))).